Here is a 256-residue protein sequence, read N- to C-terminus: Probable serine/threonine-protein kinase YbdM (256 aa).

The Protein kinase domain occupies 25-256 (YKIEECLGMG…DLNRAIQSVT (232 aa)). ATP contacts are provided by residues 31 to 39 (LGMGGYGLV) and K54. The active-site Proton acceptor is D149.

This sequence belongs to the protein kinase superfamily. Ser/Thr protein kinase family.

It carries out the reaction L-seryl-[protein] + ATP = O-phospho-L-seryl-[protein] + ADP + H(+). It catalyses the reaction L-threonyl-[protein] + ATP = O-phospho-L-threonyl-[protein] + ADP + H(+). The chain is Probable serine/threonine-protein kinase YbdM (ybdM) from Bacillus subtilis (strain 168).